A 409-amino-acid chain; its full sequence is Dual-specificity RNA methyltransferase RlmN (409 aa).

The active-site Proton acceptor is the Glu121. Residues Glu127–Leu376 enclose the Radical SAM core domain. Cys134 and Cys379 are joined by a disulfide. Cys141, Cys145, and Cys148 together coordinate [4Fe-4S] cluster. Residues Gly205–Glu206, Ser237, Ser259–His261, and Asn336 contribute to the S-adenosyl-L-methionine site. Cys379 serves as the catalytic S-methylcysteine intermediate.

This sequence belongs to the radical SAM superfamily. RlmN family. [4Fe-4S] cluster serves as cofactor.

The protein resides in the cytoplasm. It catalyses the reaction adenosine(2503) in 23S rRNA + 2 reduced [2Fe-2S]-[ferredoxin] + 2 S-adenosyl-L-methionine = 2-methyladenosine(2503) in 23S rRNA + 5'-deoxyadenosine + L-methionine + 2 oxidized [2Fe-2S]-[ferredoxin] + S-adenosyl-L-homocysteine. It carries out the reaction adenosine(37) in tRNA + 2 reduced [2Fe-2S]-[ferredoxin] + 2 S-adenosyl-L-methionine = 2-methyladenosine(37) in tRNA + 5'-deoxyadenosine + L-methionine + 2 oxidized [2Fe-2S]-[ferredoxin] + S-adenosyl-L-homocysteine. In terms of biological role, specifically methylates position 2 of adenine 2503 in 23S rRNA and position 2 of adenine 37 in tRNAs. m2A2503 modification seems to play a crucial role in the proofreading step occurring at the peptidyl transferase center and thus would serve to optimize ribosomal fidelity. This is Dual-specificity RNA methyltransferase RlmN from Rhizobium etli (strain ATCC 51251 / DSM 11541 / JCM 21823 / NBRC 15573 / CFN 42).